The primary structure comprises 430 residues: Probable folylpolyglutamate synthase (430 aa).

37 to 40 contacts ATP; the sequence is GKET. Glutamate 132 contributes to the Mg(2+) binding site. Aspartate 300 serves as a coordination point for ATP.

It belongs to the folylpolyglutamate synthase family.

It localises to the mitochondrion. The enzyme catalyses (6S)-5,6,7,8-tetrahydrofolyl-(gamma-L-Glu)(n) + L-glutamate + ATP = (6S)-5,6,7,8-tetrahydrofolyl-(gamma-L-Glu)(n+1) + ADP + phosphate + H(+). It functions in the pathway cofactor biosynthesis; tetrahydrofolylpolyglutamate biosynthesis. Conversion of folates to polyglutamate derivatives. In Saccharomyces cerevisiae (strain ATCC 204508 / S288c) (Baker's yeast), this protein is Probable folylpolyglutamate synthase (RMA1).